We begin with the raw amino-acid sequence, 431 residues long: Nuclear bridge Ish domain protein les1 (431 aa).

An N-terminal signal peptide occupies residues 1–21 (MQPRFLLHGALLALGIQLCLS).

Its subcellular location is the nucleus inner membrane. Inner nuclear envelope protein involved in nuclear fission, which is achieved via local disassembly of nuclear pores within the narrow bridge that links segregating daughter nuclei. Les1 restricts the process of local nuclear envelope breakdown to the bridge midzone to prevent the leakage of material from daughter nuclei during mitosis. In Schizosaccharomyces pombe (strain 972 / ATCC 24843) (Fission yeast), this protein is Nuclear bridge Ish domain protein les1.